A 279-amino-acid chain; its full sequence is Elongation factor Ts (279 aa).

The tract at residues 80 to 83 is involved in Mg(2+) ion dislocation from EF-Tu; that stretch reads TDFV.

The protein belongs to the EF-Ts family.

It localises to the cytoplasm. Functionally, associates with the EF-Tu.GDP complex and induces the exchange of GDP to GTP. It remains bound to the aminoacyl-tRNA.EF-Tu.GTP complex up to the GTP hydrolysis stage on the ribosome. The sequence is that of Elongation factor Ts (tsf) from Borreliella burgdorferi (strain ATCC 35210 / DSM 4680 / CIP 102532 / B31) (Borrelia burgdorferi).